The primary structure comprises 230 residues: Urease accessory protein UreE (230 aa).

Basic and acidic residues-rich tracts occupy residues 182-193 (HVHVDSPLDEPH) and 204-230 (SHGD…DHKH). The tract at residues 182–230 (HVHVDSPLDEPHGSGLHVHAIHSHGDGHSHSHSHDHDHDHRHDDHDHKH) is disordered.

This sequence belongs to the UreE family.

It localises to the cytoplasm. Its function is as follows. Involved in urease metallocenter assembly. Binds nickel. Probably functions as a nickel donor during metallocenter assembly. This Yersinia mollaretii protein is Urease accessory protein UreE.